The primary structure comprises 330 residues: Aspartate--ammonia ligase (330 aa).

Belongs to the class-II aminoacyl-tRNA synthetase family. AsnA subfamily.

The protein localises to the cytoplasm. It carries out the reaction L-aspartate + NH4(+) + ATP = L-asparagine + AMP + diphosphate + H(+). It participates in amino-acid biosynthesis; L-asparagine biosynthesis; L-asparagine from L-aspartate (ammonia route): step 1/1. This Streptococcus pyogenes serotype M2 (strain MGAS10270) protein is Aspartate--ammonia ligase.